An 834-amino-acid polypeptide reads, in one-letter code: Enhancer of filamentation 1 (834 aa).

The segment at M1–D505 is required for interaction with ITCH. The SH3 domain maps to Y3–G65. A phosphotyrosine; by ABL1 mark is found at Y92, Y164, Y166, Y177, Y189, Y214, and Y223. The segment at R102–A229 is interacts strongly with spindle-regulatory protein D1M1. The disordered stretch occupies residues E238–V260. Y279 carries the post-translational modification Phosphotyrosine; by ABL1. The tract at residues A291–A316 is disordered. S296 bears the Phosphoserine mark. Positions L306–D315 are enriched in polar residues. Y317 is subject to Phosphotyrosine; by ABL1. 2 disordered regions span residues P328–Q398 and G560–R623. Residues T332–V344 are compositionally biased toward basic and acidic residues. Positions N351–F834 are interacts with CTTN. A Caspase cleavage related site motif is present at residues D360 to D363. S369 is modified (phosphoserine). Residues S369–S395 are compositionally biased toward low complexity. The tract at residues F710 to G760 is divergent helix-loop-helix motif. The required for interaction with PLK1 stretch occupies residues F710 to F834. The residue at position 780 (S780) is a Phosphoserine; by CSNK1D and CSNK1E. Position 804 is a phosphothreonine; by CSNK1E (T804).

This sequence belongs to the CAS family. In terms of assembly, homodimer. Forms heterodimers with BCAR1/p130cas. Forms complexes with PTK2B/RAFTK, adapter protein CRKL and LYN kinase. Part of a complex composed of NEDD9, AURKA and CTTN; within the complex NEDD9 acts as a scaffold protein and is required for complex formation. Part of a ternary complex composed of SMAD3, ITCH/AIP4 and NEDD9/HEF1; within the complex NEDD9/HEF1 interacts (via N-terminus) with ITCH/AIP4 (via WW domains); the complex mediates ubiquitination and proteasomal degradation of NEDD9/HEF1. Interacts with SMAD3; the interaction promotes NEDD9 ubiquitination and proteasomal degradation. Interacts with ID2. Interacts with CTTN (via N-terminus). Interacts with MICAL. Interacts with TXNL4/DIM1. Interacts with BCAR3 (via Ras-GEF domain). Interacts with SH2D3C isoform 1 and isoform 2. Interacts with ECT2. Interacts with PTPN11/SHP-2 (via SH2 domains); the interaction is enhanced when NEDD9/CAS-L is tyrosine phosphorylated. Interacts (via C-terminus) with PLK1 (via polo box domains). Interacts with NKX2-5. Interacts with SMAD3; the interaction is inhibited by oxidation of NEDD9. Interacts with NEDD9/HEF1; interaction is induced by CXCL12 promotion of ABL-mediated phosphorylation of NEDD9/HEF1. Interacts (via SH3 domain) with PTK2/FAK. Interacts with FYN; in the presence of PTK2. Interacts with INPPL1/SHIP2. Cell cycle-regulated processing produces four isoforms: p115, p105, p65, and p55. Isoform p115 arises from p105 phosphorylation and appears later in the cell cycle. Isoform p55 arises from p105 as a result of cleavage at a caspase cleavage-related site and it appears specifically at mitosis. The p65 isoform is poorly detected. Post-translationally, polyubiquitinated by ITCH/AIP4, leading to proteasomal degradation. In terms of processing, PTK2/FAK1 phosphorylates the protein at the YDYVHL motif (conserved among all cas proteins) following integrin stimulation. The SRC family kinases (FYN, SRC, LCK and CRK) are recruited to the phosphorylated sites and can phosphorylate other tyrosine residues. Ligation of either integrin beta-1 or B-cell antigen receptor on tonsillar B-cells and B-cell lines promotes tyrosine phosphorylation and both integrin and BCR-mediated tyrosine phosphorylation requires an intact actin network. Phosphorylation is required to recruit NEDD9 to T-cell receptor microclusters at the periphery of newly formed immunological synapses. In fibroblasts transformation with oncogene v-ABL results in an increase in tyrosine phosphorylation. Transiently phosphorylated following CD3 cross-linking and this phosphorylated form binds to CRKL and C3G. A mutant lacking the SH3 domain is phosphorylated upon CD3 cross-linking but not upon integrin beta-1 cross-linking. Tyrosine phosphorylation occurs upon stimulation of the G-protein coupled C1a calcitonin receptor. Calcitonin-stimulated tyrosine phosphorylation is mediated by calcium- and protein kinase C-dependent mechanisms and requires the integrity of the actin cytoskeleton. Phosphorylation at Ser-369 induces proteasomal degradation. Phosphorylated by LYN. Phosphorylation at Ser-780 by CSNK1D or CSNK1E, or phosphorylation of Thr-804 by CSNK1E enhances the interaction of NEDD9 with PLK1. As to expression, expressed in B-cells (at protein level). Expressed in the respiratory epithelium of the main bronchi to the bronchioles in the lungs (at protein level). High levels detected in kidney, lung, and placenta. Expressed in lymphocytes.

The protein localises to the cytoplasm. It localises to the cell cortex. The protein resides in the nucleus. It is found in the golgi apparatus. Its subcellular location is the cell projection. The protein localises to the lamellipodium. It localises to the cell junction. The protein resides in the focal adhesion. It is found in the cytoskeleton. Its subcellular location is the spindle pole. The protein localises to the cilium. It localises to the cilium basal body. The protein resides in the basolateral cell membrane. It is found in the spindle. Its function is as follows. Scaffolding protein which plays a central coordinating role for tyrosine-kinase-based signaling related to cell adhesion. As a focal adhesion protein, plays a role in embryonic fibroblast migration. May play an important role in integrin beta-1 or B cell antigen receptor (BCR) mediated signaling in B- and T-cells. Integrin beta-1 stimulation leads to recruitment of various proteins including CRKL and SHPTP2 to the tyrosine phosphorylated form. Promotes adhesion and migration of lymphocytes; as a result required for the correct migration of lymphocytes to the spleen and other secondary lymphoid organs. Plays a role in the organization of T-cell F-actin cortical cytoskeleton and the centralization of T-cell receptor microclusters at the immunological synapse. Negatively regulates cilia outgrowth in polarized cysts. Modulates cilia disassembly via activation of AURKA-mediated phosphorylation of HDAC6 and subsequent deacetylation of alpha-tubulin. Positively regulates RANKL-induced osteoclastogenesis. Required for the maintenance of hippocampal dendritic spines in the dentate gyrus and CA1 regions, thereby involved in spatial learning and memory. The polypeptide is Enhancer of filamentation 1 (Homo sapiens (Human)).